Reading from the N-terminus, the 449-residue chain is Heterogeneous nuclear ribonucleoprotein H2 (449 aa).

An N-acetylmethionine modification is found at methionine 1. Position 2 is an N-acetylmethionine; in Heterogeneous nuclear ribonucleoprotein H2, N-terminally processed (methionine 2). One can recognise an RRM 1 domain in the interval phenylalanine 11–serine 90. At serine 23 the chain carries Phosphoserine. Residue lysine 35 forms a Glycyl lysine isopeptide (Lys-Gly) (interchain with G-Cter in SUMO2) linkage. 2 positions are modified to phosphoserine: serine 54 and serine 63. A Glycyl lysine isopeptide (Lys-Gly) (interchain with G-Cter in SUMO2) cross-link involves residue lysine 87. The residue at position 90 (serine 90) is a Phosphoserine. A Glycyl lysine isopeptide (Lys-Gly) (interchain with G-Cter in SUMO2) cross-link involves residue lysine 98. The RRM 2 domain maps to glycine 111 to arginine 188. The residue at position 233 (arginine 233) is a Dimethylated arginine; alternate. Arginine 233 bears the Omega-N-methylarginine; alternate mark. The 1-1 repeat unit spans residues glycine 234–tyrosine 249. The segment at glycine 234–tyrosine 433 is 2 X 16 AA Gly-rich approximate repeats. The residue at position 246 (tyrosine 246) is a Phosphotyrosine. One can recognise an RRM 3 domain in the interval histidine 289–threonine 364. At serine 310 the chain carries Phosphoserine. Tandem repeats lie at residues histidine 354–tyrosine 372, histidine 374–tyrosine 392, and glycine 418–tyrosine 433. Positions histidine 354 to tyrosine 392 are 2 X 19 AA perfect repeats.

Component of a ribonucleoprotein complex containing mRNAs and RNA-binding proteins including DDX5, HNRNPH2 and SRSF1 as well as splicing regulator ARVCF. Interacts with TXNL4/DIM1. In terms of tissue distribution, expressed ubiquitously.

It is found in the nucleus. The protein resides in the nucleoplasm. Its function is as follows. This protein is a component of the heterogeneous nuclear ribonucleoprotein (hnRNP) complexes which provide the substrate for the processing events that pre-mRNAs undergo before becoming functional, translatable mRNAs in the cytoplasm. Binds poly(RG). This Homo sapiens (Human) protein is Heterogeneous nuclear ribonucleoprotein H2 (HNRNPH2).